A 644-amino-acid chain; its full sequence is Arabinosyltransferase XEG113 (644 aa).

Topologically, residues 1-17 (MVEGWRNGFRDATNSKP) are cytoplasmic. The helical; Signal-anchor for type II membrane protein transmembrane segment at 18-38 (LFVTIYATVIIGVLVSSFYVF) threads the bilayer. The Lumenal portion of the chain corresponds to 39-644 (SAIYSPTNGS…QTPEEDHPPL (606 aa)). N-linked (GlcNAc...) asparagine glycans are attached at residues asparagine 46 and asparagine 70. The short motif at 226 to 228 (DTD) is the DXD motif element. N-linked (GlcNAc...) asparagine glycosylation is found at asparagine 446 and asparagine 542.

It belongs to the glycosyltransferase 77 family.

Its subcellular location is the golgi apparatus membrane. Functionally, plays a role in the arabinosylation of cell wall components. Involved in the arabinosylation of extensin proteins in root hair cells. Extensins are structural glycoproteins present in cell walls and its arabinosylation is important for cell elongation, root hair cell development, lateral root development and root hair tip growth. The polypeptide is Arabinosyltransferase XEG113 (Arabidopsis thaliana (Mouse-ear cress)).